Reading from the N-terminus, the 543-residue chain is CTP synthase (543 aa).

The amidoligase domain stretch occupies residues 1–265; it reads MARFIFITGG…DSEVLRAFGI (265 aa). A CTP-binding site is contributed by serine 13. A UTP-binding site is contributed by serine 13. Residue 14-19 coordinates ATP; that stretch reads SLGKGL. Residue tyrosine 54 coordinates L-glutamine. An ATP-binding site is contributed by aspartate 71. Residues aspartate 71 and glutamate 139 each coordinate Mg(2+). CTP contacts are provided by residues 146-148, 186-191, and lysine 222; these read DIE and KTKPTQ. UTP-binding positions include 186–191 and lysine 222; that span reads KTKPTQ. The Glutamine amidotransferase type-1 domain occupies 291-542; that stretch reads TIGVVGKYVS…IEAAVKQSRL (252 aa). Glycine 354 is an L-glutamine binding site. Cysteine 381 serves as the catalytic Nucleophile; for glutamine hydrolysis. L-glutamine is bound by residues 382–385, glutamate 405, and arginine 470; that span reads LGMQ. Catalysis depends on residues histidine 515 and glutamate 517.

The protein belongs to the CTP synthase family. In terms of assembly, homotetramer.

It catalyses the reaction UTP + L-glutamine + ATP + H2O = CTP + L-glutamate + ADP + phosphate + 2 H(+). The enzyme catalyses L-glutamine + H2O = L-glutamate + NH4(+). The catalysed reaction is UTP + NH4(+) + ATP = CTP + ADP + phosphate + 2 H(+). It participates in pyrimidine metabolism; CTP biosynthesis via de novo pathway; CTP from UDP: step 2/2. Its activity is regulated as follows. Allosterically activated by GTP, when glutamine is the substrate; GTP has no effect on the reaction when ammonia is the substrate. The allosteric effector GTP functions by stabilizing the protein conformation that binds the tetrahedral intermediate(s) formed during glutamine hydrolysis. Inhibited by the product CTP, via allosteric rather than competitive inhibition. Its function is as follows. Catalyzes the ATP-dependent amination of UTP to CTP with either L-glutamine or ammonia as the source of nitrogen. Regulates intracellular CTP levels through interactions with the four ribonucleotide triphosphates. The chain is CTP synthase from Sphingopyxis alaskensis (strain DSM 13593 / LMG 18877 / RB2256) (Sphingomonas alaskensis).